The following is a 449-amino-acid chain: UDP-N-acetylmuramoylalanine--D-glutamate ligase (449 aa).

ATP is bound at residue 119–125; sequence GTNGKTT.

This sequence belongs to the MurCDEF family.

Its subcellular location is the cytoplasm. It carries out the reaction UDP-N-acetyl-alpha-D-muramoyl-L-alanine + D-glutamate + ATP = UDP-N-acetyl-alpha-D-muramoyl-L-alanyl-D-glutamate + ADP + phosphate + H(+). The protein operates within cell wall biogenesis; peptidoglycan biosynthesis. In terms of biological role, cell wall formation. Catalyzes the addition of glutamate to the nucleotide precursor UDP-N-acetylmuramoyl-L-alanine (UMA). The protein is UDP-N-acetylmuramoylalanine--D-glutamate ligase of Lactococcus lactis subsp. cremoris (strain MG1363).